The following is a 430-amino-acid chain: Tol-Pal system protein TolB (430 aa).

The first 21 residues, 1-21 (MKQAFRLMVGLLVLWASVLHA), serve as a signal peptide directing secretion.

This sequence belongs to the TolB family. In terms of assembly, the Tol-Pal system is composed of five core proteins: the inner membrane proteins TolA, TolQ and TolR, the periplasmic protein TolB and the outer membrane protein Pal. They form a network linking the inner and outer membranes and the peptidoglycan layer.

It localises to the periplasm. In terms of biological role, part of the Tol-Pal system, which plays a role in outer membrane invagination during cell division and is important for maintaining outer membrane integrity. TolB occupies a key intermediary position in the Tol-Pal system because it communicates directly with both membrane-embedded components, Pal in the outer membrane and TolA in the inner membrane. This Edwardsiella ictaluri (strain 93-146) protein is Tol-Pal system protein TolB.